We begin with the raw amino-acid sequence, 145 residues long: Neutral phospholipase A2 homolog taipoxin beta chain 1 (145 aa).

Positions 1–27 are cleaved as a signal peptide; that stretch reads MHPAHLLVLLAVCVSLLGASDIPPLPL. 7 cysteine pairs are disulfide-bonded: Cys38–Cys98, Cys54–Cys144, Cys56–Cys72, Cys71–Cys125, Cys78–Cys118, Cys87–Cys111, and Cys105–Cys116.

Belongs to the phospholipase A2 family. Group I subfamily. D49 sub-subfamily. Heterotrimer of alpha, beta, and gamma chains; non-covalently linked. Expressed by the venom gland.

Its subcellular location is the secreted. In terms of biological role, heterotrimer: Snake venom phospholipase A2 (PLA2) heterotrimer that acts as a potent presynaptic neurotoxin by blocking synaptic transmission and synaptic vesicle recycling. May act by binding in a calcium-dependent fashion to neurotonal pentraxin-1 (NPTX1) and neurotonal pentraxin-2 (NPTX2), but not to neuronal pentraxin receptor (NPTXR). Also binds to taipoxin-associated calcium binding protein 49 (RCN2), a protein localized in the lumen of endoplasmic reticulum. Monomer (beta chain): Snake venom phospholipase A2 homolog that is neither toxic nor enzymatically active. Does not bind calcium. This is Neutral phospholipase A2 homolog taipoxin beta chain 1 from Oxyuranus scutellatus scutellatus (Australian taipan).